We begin with the raw amino-acid sequence, 379 residues long: Ribosomal RNA large subunit methyltransferase G (379 aa).

Belongs to the methyltransferase superfamily. RlmG family.

Its subcellular location is the cytoplasm. It catalyses the reaction guanosine(1835) in 23S rRNA + S-adenosyl-L-methionine = N(2)-methylguanosine(1835) in 23S rRNA + S-adenosyl-L-homocysteine + H(+). In terms of biological role, specifically methylates the guanine in position 1835 (m2G1835) of 23S rRNA. The sequence is that of Ribosomal RNA large subunit methyltransferase G from Serratia proteamaculans (strain 568).